A 428-amino-acid chain; its full sequence is Aminotransferase verI (428 aa).

The residue at position 254 (K254) is an N6-(pyridoxal phosphate)lysine.

It belongs to the class-I pyridoxal-phosphate-dependent aminotransferase family. It depends on pyridoxal 5'-phosphate as a cofactor.

It participates in mycotoxin biosynthesis. In terms of biological role, aminotransferase; part of the gene cluster that mediates the biosynthesis of 11'-deoxyverticillin A, one of the dimeric epipolythiodioxopiperazines (ETPs) from the verticillin family that act as mycotoxins. 11'-deoxyverticillin A is required for normal conidiation. The nonribosomal peptide synthetase verP is speculated to be responsible for condensation of amino acids to form the carbon skeleton of verticillin, whereas the cluster-specific tailoring enzymes are involved in further modifications leading to the production of 11'-deoxyverticillin A. The sequence is that of Aminotransferase verI from Clonostachys rogersoniana.